The sequence spans 142 residues: Large ribosomal subunit protein uL11 (142 aa).

Belongs to the universal ribosomal protein uL11 family. Part of the ribosomal stalk of the 50S ribosomal subunit. Interacts with L10 and the large rRNA to form the base of the stalk. L10 forms an elongated spine to which L12 dimers bind in a sequential fashion forming a multimeric L10(L12)X complex. In terms of processing, one or more lysine residues are methylated.

Forms part of the ribosomal stalk which helps the ribosome interact with GTP-bound translation factors. In Enterobacter sp. (strain 638), this protein is Large ribosomal subunit protein uL11.